A 534-amino-acid chain; its full sequence is MVQRWLYSTNAKDIAVLYFMLAIFSGMAGTAMSLIIRLELAAPGSQYLQGNAQLFNVLVVGHAVLMIFFLVMPALIGGFGNYLLPLMIGATDTAFPRINNIAFWVLPMGLVCLVTSTLVESGAGTGWTVYPPLSSIQAHSGPSVDLAIFALHLTSISSLLGAINFIVTTLNMRTNGMTMHKLPLFVWSIFITAFLLLLSLPVLSAGITMLLLDRNFNTSFFEVAGGGDPILYEHLFYFFGHPEVYILIIPGFGIISHVVSTYSKKPVFGEISMVYAMASIGLLGFLVWSHHMYIVGLDADTRAYFTSATMIIAIPTGIKIFSWLATIYGGSIRLATPMLYAIAFLFLFTMGGLTGVALANASLDVAFHDTYYVVGHFHYVLSMGAIFSLFAGYYYWSPQILGLNYNEKLAQIQFWLIFIGANVIFFPMHFLGINGMPRRIPDYPDAFAGWNYVASIGSFIATLSLFLFIYILYDQLVNGLNNKVNNKSVIYTKAPDFVESNTIFNLNTVKSSSIEFLLTSPPAVHSFNTPAVQS.

A helical membrane pass occupies residues 16–36; the sequence is VLYFMLAIFSGMAGTAMSLII. Ca(2+) is bound by residues Glu-39, Ala-42, and Gly-44. 6 helical membrane passes run 57–77, 101–121, 147–167, 182–202, 235–255, and 267–287; these read VLVVGHAVLMIFFLVMPALIG, IAFWVLPMGLVCLVTSTLVES, AIFALHLTSISSLLGAINFIV, LPLFVWSIFITAFLLLLSLPV, LFYFFGHPEVYILIIPGFGII, and VFGEISMVYAMASIGLLGFLV. His-62 serves as a coordination point for Fe(II)-heme a. His-241 provides a ligand contact to Cu cation. Residues 241 to 245 constitute a cross-link (1'-histidyl-3'-tyrosine (His-Tyr)); sequence HPEVY. Tyr-245 serves as a coordination point for O2. Residues His-290 and His-291 each contribute to the Cu cation site. 2 helical membrane-spanning segments follow: residues 310 to 330 and 338 to 358; these read MIIAIPTGIKIFSWLATIYGG and MLYAIAFLFLFTMGGLTGVAL. 2 residues coordinate Mg(2+): His-368 and Asp-369. 2 consecutive transmembrane segments (helical) span residues 372 to 392 and 414 to 434; these read YVVGHFHYVLSMGAIFSLFAG and FWLIFIGANVIFFPMHFLGIN. Heme a3 is bound at residue His-376. Residue His-378 coordinates Fe(II)-heme a. A Ca(2+)-binding site is contributed by Pro-441. The chain crosses the membrane as a helical span at residues 452–472; sequence YVASIGSFIATLSLFLFIYIL.

This sequence belongs to the heme-copper respiratory oxidase family. Component of the cytochrome c oxidase (complex IV, CIV), a multisubunit enzyme composed of a catalytic core of 3 subunits and several supernumerary subunits. The complex exists as a monomer or a dimer and forms supercomplexes (SCs) in the inner mitochondrial membrane with ubiquinol-cytochrome c oxidoreductase (cytochrome b-c1 complex, complex III, CIII). Requires heme as cofactor. Cu cation is required as a cofactor.

It localises to the mitochondrion inner membrane. The catalysed reaction is 4 Fe(II)-[cytochrome c] + O2 + 8 H(+)(in) = 4 Fe(III)-[cytochrome c] + 2 H2O + 4 H(+)(out). It participates in energy metabolism; oxidative phosphorylation. Component of the cytochrome c oxidase, the last enzyme in the mitochondrial electron transport chain which drives oxidative phosphorylation. The respiratory chain contains 3 multisubunit complexes succinate dehydrogenase (complex II, CII), ubiquinol-cytochrome c oxidoreductase (cytochrome b-c1 complex, complex III, CIII) and cytochrome c oxidase (complex IV, CIV), that cooperate to transfer electrons derived from NADH and succinate to molecular oxygen, creating an electrochemical gradient over the inner membrane that drives transmembrane transport and the ATP synthase. Cytochrome c oxidase is the component of the respiratory chain that catalyzes the reduction of oxygen to water. Electrons originating from reduced cytochrome c in the intermembrane space (IMS) are transferred via the dinuclear copper A center (CU(A)) of subunit 2 and heme A of subunit 1 to the active site in subunit 1, a binuclear center (BNC) formed by heme A3 and copper B (CU(B)). The BNC reduces molecular oxygen to 2 water molecules using 4 electrons from cytochrome c in the IMS and 4 protons from the mitochondrial matrix. The polypeptide is Cytochrome c oxidase subunit 1 (COXI) (Saccharomyces paradoxus (Yeast)).